The primary structure comprises 428 residues: Enolase (428 aa).

Gln-164 is a (2R)-2-phosphoglycerate binding site. Glu-206 (proton donor) is an active-site residue. Positions 243, 286, and 313 each coordinate Mg(2+). (2R)-2-phosphoglycerate-binding residues include Lys-338, Arg-367, Ser-368, and Lys-389. Lys-338 functions as the Proton acceptor in the catalytic mechanism.

It belongs to the enolase family. It depends on Mg(2+) as a cofactor.

Its subcellular location is the cytoplasm. It is found in the secreted. The protein resides in the cell surface. It carries out the reaction (2R)-2-phosphoglycerate = phosphoenolpyruvate + H2O. Its pathway is carbohydrate degradation; glycolysis; pyruvate from D-glyceraldehyde 3-phosphate: step 4/5. Functionally, catalyzes the reversible conversion of 2-phosphoglycerate (2-PG) into phosphoenolpyruvate (PEP). It is essential for the degradation of carbohydrates via glycolysis. The chain is Enolase from Dehalococcoides mccartyi (strain ATCC BAA-2266 / KCTC 15142 / 195) (Dehalococcoides ethenogenes (strain 195)).